The following is a 172-amino-acid chain: MDFSSKIRLIKDFPKPGINFRDITTLLQDAKAFKQAVDAMVGLCKDFDVDVIACPEARGFVLGAPMAYAMGKGLVLLRKPGKLPGKAVSHSYQLEYGMDSLEVHEGAILPGHKVLLVDDVLATGGTVAAGVELIKKTGGEVVGIAFLIELLGLNARDKLGNYPVVTLLQLDA.

The protein belongs to the purine/pyrimidine phosphoribosyltransferase family. In terms of assembly, homodimer.

Its subcellular location is the cytoplasm. It carries out the reaction AMP + diphosphate = 5-phospho-alpha-D-ribose 1-diphosphate + adenine. It functions in the pathway purine metabolism; AMP biosynthesis via salvage pathway; AMP from adenine: step 1/1. In terms of biological role, catalyzes a salvage reaction resulting in the formation of AMP, that is energically less costly than de novo synthesis. This Desulforamulus reducens (strain ATCC BAA-1160 / DSM 100696 / MI-1) (Desulfotomaculum reducens) protein is Adenine phosphoribosyltransferase.